The chain runs to 371 residues: Protein MxiG (371 aa).

Residues 127–141 (VFFFFAVIVVLIIIF) form a helical membrane-spanning segment.

Its subcellular location is the cell inner membrane. The protein resides in the cell outer membrane. Its function is as follows. Involved in the secretion of the Ipa antigens. Involved in the intracellular dissemination of Shigella. Part of the Mxi-Spa secretion apparatus. This chain is Protein MxiG (mxiG), found in Shigella flexneri.